The sequence spans 141 residues: 16 kDa protein (141 aa).

Residues 97-119 (ASATVKKSHKSKPSKKKFKERKD) form a disordered region. Residues 102-115 (KKSHKSKPSKKKFK) are compositionally biased toward basic residues.

The chain is 16 kDa protein from Beta vulgaris (Sugar beet).